The following is a 477-amino-acid chain: PTS system glucose-specific EIICB component (477 aa).

Over 1-14 (MFKNAFANLQKVGK) the chain is Cytoplasmic. Positions 1-388 (MFKNAFANLQ…LDLKTPGRED (388 aa)) constitute a PTS EIIC type-1 domain. The helical transmembrane segment at 15–35 (SLMLPVSVLPIAGILLGVGSA) threads the bilayer. Topologically, residues 36–50 (NFSWLPAVVSHVMAE) are periplasmic. A helical transmembrane segment spans residues 51–71 (AGGSVFANMPLIFAIGVALGF). Over 72–79 (TNNDGVSA) the chain is Cytoplasmic. The helical transmembrane segment at 80–100 (LAAVVAYGIMVKTMAVVAPLV) threads the bilayer. At 101–111 (LHLPAEEIASK) the chain is on the periplasmic side. Residues 112 to 132 (HLADTGVLGGIISGAIAAYMF) traverse the membrane as a helical segment. Residues 133-151 (NRFYRIKLPEYLGFFAGKR) lie on the Cytoplasmic side of the membrane. A helical membrane pass occupies residues 152-172 (FVPIISGLAAIFTGVVLSFIW). The Periplasmic portion of the chain corresponds to 173-190 (PPIGSAIQTFSQWAAYQN). The chain crosses the membrane as a helical span at residues 191-211 (PVVAFGIYGFIERCLVPFGLH). Topologically, residues 212–249 (HIWNVPFQMQIGEYTNAAGQVFHGDIPRYMAGDPTAGK) are cytoplasmic. The chain crosses the membrane as a helical span at residues 250-270 (LSGGFLFKMYGLPAAAIAIWH). Over 271–279 (SAKPENRAK) the chain is Periplasmic. Residues 280–300 (VGGIMISAALTSFLTGITEPI) form a helical membrane-spanning segment. At 301–309 (EFSFMFVAP) the chain is on the cytoplasmic side. Residues 310 to 330 (ILYIIHAILAGLAFPICILLG) form a helical membrane-spanning segment. Residues 331 to 355 (MRDGTSFSHGLIDFIVLSGNSSKLW) are Periplasmic-facing. A helical membrane pass occupies residues 356–376 (LFPIVGIGYAIVYYTIFRVLI). Over 377-477 (KALDLKTPGR…TEMDEYIRNH (101 aa)) the chain is Cytoplasmic. The 79-residue stretch at 399–477 (SEMAPALVAA…TEMDEYIRNH (79 aa)) folds into the PTS EIIB type-1 domain. Residue C421 is the Phosphocysteinsyse intermediate; for EIIB activity of the active site. C421 carries the post-translational modification Phosphocysteine.

The protein resides in the cell inner membrane. The enzyme catalyses N(pros)-phospho-L-histidyl-[protein] + D-glucose(out) = D-glucose 6-phosphate(in) + L-histidyl-[protein]. Its function is as follows. The phosphoenolpyruvate-dependent sugar phosphotransferase system (sugar PTS), a major carbohydrate active transport system, catalyzes the phosphorylation of incoming sugar substrates concomitantly with their translocation across the cell membrane. The enzyme II complex composed of PtsG and Crr is involved in glucose transport. Also functions as a chemoreceptor monitoring the environment for changes in sugar concentration. The protein is PTS system glucose-specific EIICB component (ptsG) of Escherichia coli O6:H1 (strain CFT073 / ATCC 700928 / UPEC).